A 481-amino-acid chain; its full sequence is Protein hedgehog (481 aa).

The N-palmitoyl cysteine moiety is linked to residue Cys93. Residues Glu157, Glu158, Asp163, Thr193, Glu194, Asp197, and Asp199 each contribute to the Ca(2+) site. Gly265 carries Cholesterol glycine ester lipidation.

It belongs to the hedgehog family. In terms of assembly, interacts with shf. The C-terminal part of the hedgehog protein precursor displays an autoproteolysis activity that results in the cleavage of the full-length protein into two parts (N-product and C-product). In addition, the C-terminal part displays a cholesterol transferase activity that results by the covalent attachment of a cholesterol moiety to the C-terminal of the newly generated N-product. The N-product is the active species in both local and long-range signaling, whereas the C-product has no signaling activity. In terms of processing, cholesterylation is required for N-product targeting to lipid rafts and multimerization. Post-translationally, N-palmitoylation by Rasp of the hedgehog N-product, within the secretory pathway, is required for the embryonic and larval patterning activities of the hedgehog signal.

Its subcellular location is the nucleus. It localises to the cytoplasm. The protein resides in the cell membrane. It catalyses the reaction glycyl-L-cysteinyl-[protein] + cholesterol + H(+) = [protein]-C-terminal glycyl cholesterol ester + N-terminal L-cysteinyl-[protein]. The C-terminal part of the hedgehog protein precursor displays an autoproteolysis activity that results in the cleavage of the full-length protein into two parts (N-product and C-product). In addition, the C-terminal part displays a cholesterol transferase activity that results by the covalent attachment of a cholesterol moiety to the C-terminal of the newly generated N-product. Once cleaved, the C-product has no signaling activity and diffuses from the cell. Its function is as follows. The dually lipidated hedgehog protein N-product is a morphogen which is essential for a variety of patterning events during development. Establishes the anterior-posterior axis of the embryonic segments and patterns the larval imaginal disks. Binds to the patched (ptc) receptor, which functions in association with smoothened (smo), to activate the transcription of target genes wingless (wg), decapentaplegic (dpp) and ptc. In the absence of hh, ptc represses the constitutive signaling activity of smo through fused (fu). Essential component of a signaling pathway which regulates the Duox-dependent gut immune response to bacterial uracil; required to activate Cad99C-dependent endosome formation, norpA-dependent Ca2+ mobilization and p38 MAPK, which are essential steps in the Duox-dependent production of reactive oxygen species (ROS) in response to intestinal bacterial infection. During photoreceptor differentiation, it up-regulates transcription of Ubr3, which in turn promotes the hh-signaling pathway by mediating the ubiquitination and degradation of cos. This chain is Protein hedgehog (hh-1), found in Drosophila pseudoobscura pseudoobscura (Fruit fly).